Consider the following 258-residue polypeptide: MVLIRVLANLVMLHLSYGEKSSELVIGGRPCNINQHRSLALLYNSSGFLCGGTLINQQWVLSAAHCDMENMQIYLGLHNFSLPNMDQKRRVAEEKFFCLSNKSYTKWDKDIMLIKLNRRVKTSTHIAPLSLPSNPPRLRSVCRIMGWGSITSPRETLPYVPHCANIMILRYWVCRAIYGSLPAKSRTLCAGVPRRRIGSCLGDSGGPLICNGQIQGIASWGSDPCVNHGAPGVYTKVFDYNDWIQSIIAGNTAATCPP.

The N-terminal stretch at 1–18 is a signal peptide; that stretch reads MVLIRVLANLVMLHLSYG. A propeptide spanning residues 19-24 is cleaved from the precursor; sequence EKSSEL. Positions 25–249 constitute a Peptidase S1 domain; the sequence is VIGGRPCNIN…YNDWIQSIIA (225 aa). 6 disulfides stabilise this stretch: Cys31-Cys163, Cys50-Cys66, Cys98-Cys256, Cys142-Cys210, Cys174-Cys189, and Cys200-Cys225. The N-linked (GlcNAc...) asparagine glycan is linked to Asn44. The Charge relay system role is filled by His65. Asn79 and Asn101 each carry an N-linked (GlcNAc...) asparagine glycan. The Charge relay system role is filled by Asp110. Ser204 serves as the catalytic Charge relay system.

The protein belongs to the peptidase S1 family. Snake venom subfamily. Monomer. Glycosylated. Contains 8.5% of hexoses, 5.8% of hexosamines and 0.8% of sialic acids. In terms of tissue distribution, expressed by the venom gland.

It localises to the secreted. Inhibited by diisopropylfluorophosphate (DFP) and PMSF, and partially by soybean trypsin inhibitor, but not by EDTA. Degrades alpha chain of fibrinogen (FGA), and has strong caseinolytic activity. Cleaves oxidized insulin B-chain at '40-Tyr-|-Leu-41', '48-Phe-|-Phe-49' and '49-Phe-|-Tyr-50', and glucagon at the bonds '62-Tyr-|-Ser-63', 66-Leu-|-Asp-67' and '78-Leu-|-Met-79' bonds. The polypeptide is Alpha-fibrinogenase (Macrovipera lebetinus (Levantine viper)).